Reading from the N-terminus, the 189-residue chain is Peptidyl-tRNA hydrolase (189 aa).

Tyr15 serves as a coordination point for tRNA. His20 functions as the Proton acceptor in the catalytic mechanism. 3 residues coordinate tRNA: Phe66, Asn68, and Asn114.

This sequence belongs to the PTH family. In terms of assembly, monomer.

It localises to the cytoplasm. It catalyses the reaction an N-acyl-L-alpha-aminoacyl-tRNA + H2O = an N-acyl-L-amino acid + a tRNA + H(+). Its function is as follows. Hydrolyzes ribosome-free peptidyl-tRNAs (with 1 or more amino acids incorporated), which drop off the ribosome during protein synthesis, or as a result of ribosome stalling. Catalyzes the release of premature peptidyl moieties from peptidyl-tRNA molecules trapped in stalled 50S ribosomal subunits, and thus maintains levels of free tRNAs and 50S ribosomes. The chain is Peptidyl-tRNA hydrolase from Streptococcus equi subsp. zooepidemicus (strain H70).